Consider the following 190-residue polypeptide: Segregation and condensation protein B (190 aa).

It belongs to the ScpB family. Homodimer. Homodimerization may be required to stabilize the binding of ScpA to the Smc head domains. Component of a cohesin-like complex composed of ScpA, ScpB and the Smc homodimer, in which ScpA and ScpB bind to the head domain of Smc. The presence of the three proteins is required for the association of the complex with DNA.

The protein localises to the cytoplasm. Participates in chromosomal partition during cell division. May act via the formation of a condensin-like complex containing Smc and ScpA that pull DNA away from mid-cell into both cell halves. This chain is Segregation and condensation protein B, found in Bacillus mycoides (strain KBAB4) (Bacillus weihenstephanensis).